Here is a 182-residue protein sequence, read N- to C-terminus: P21 prophage-derived terminase small subunit (182 aa).

Position 31 to 36 (S31 to G36) interacts with ATP.

The protein belongs to the terminase small subunit family. As to quaternary structure, heterooligomer of gp1 and gp2.

Involved in the initiation of the phage DNA packaging into the prohead. Processes replicating concatemeric DNA into pieces of unit length with cohesive ends. This Escherichia coli O6:H1 (strain CFT073 / ATCC 700928 / UPEC) protein is P21 prophage-derived terminase small subunit (nohA).